We begin with the raw amino-acid sequence, 250 residues long: 3-deoxy-manno-octulosonate cytidylyltransferase (250 aa).

This sequence belongs to the KdsB family.

It localises to the cytoplasm. It carries out the reaction 3-deoxy-alpha-D-manno-oct-2-ulosonate + CTP = CMP-3-deoxy-beta-D-manno-octulosonate + diphosphate. Its pathway is nucleotide-sugar biosynthesis; CMP-3-deoxy-D-manno-octulosonate biosynthesis; CMP-3-deoxy-D-manno-octulosonate from 3-deoxy-D-manno-octulosonate and CTP: step 1/1. The protein operates within bacterial outer membrane biogenesis; lipopolysaccharide biosynthesis. Functionally, activates KDO (a required 8-carbon sugar) for incorporation into bacterial lipopolysaccharide in Gram-negative bacteria. In Francisella tularensis subsp. holarctica (strain FTNF002-00 / FTA), this protein is 3-deoxy-manno-octulosonate cytidylyltransferase.